We begin with the raw amino-acid sequence, 316 residues long: Pantothenate kinase (316 aa).

95 to 102 contacts ATP; that stretch reads GSVAVGKS.

It belongs to the prokaryotic pantothenate kinase family.

Its subcellular location is the cytoplasm. It carries out the reaction (R)-pantothenate + ATP = (R)-4'-phosphopantothenate + ADP + H(+). The protein operates within cofactor biosynthesis; coenzyme A biosynthesis; CoA from (R)-pantothenate: step 1/5. This chain is Pantothenate kinase, found in Cronobacter sakazakii (strain ATCC BAA-894) (Enterobacter sakazakii).